The primary structure comprises 63 residues: Sperm protamine P1 (63 aa).

Positions 1 to 63 are disordered; the sequence is MARYRRHSRS…RYSRRGRRRY (63 aa).

It belongs to the protamine P1 family. In terms of tissue distribution, testis.

The protein localises to the nucleus. Its subcellular location is the chromosome. Protamines substitute for histones in the chromatin of sperm during the haploid phase of spermatogenesis. They compact sperm DNA into a highly condensed, stable and inactive complex. In Pseudantechinus macdonnellensis (Fat-tailed marsupial mouse), this protein is Sperm protamine P1 (PRM1).